Reading from the N-terminus, the 85-residue chain is CDC42 small effector protein homolog (85 aa).

Residues C14 and C15 are each lipidated (S-palmitoyl cysteine). The CRIB domain occupies 37-50 (IGNPTNFVHTGHIG). S78 and S81 each carry phosphoserine.

Belongs to the CDC42SE/SPEC family.

The protein resides in the cytoplasm. It is found in the cytoskeleton. It localises to the cell membrane. Probably involved in the organization of the actin cytoskeleton by acting downstream of CDC42, inducing actin filament assembly. The protein is CDC42 small effector protein homolog (Spec2) of Drosophila melanogaster (Fruit fly).